The primary structure comprises 246 residues: UDP-2,3-diacylglucosamine hydrolase (246 aa).

5 residues coordinate Mn(2+): Asp8, His10, Asp41, Asn79, and His114. 79-80 provides a ligand contact to substrate; that stretch reads NR. Substrate contacts are provided by Asp122, Ser160, Asn164, Lys167, and His195. Positions 195 and 197 each coordinate Mn(2+).

It belongs to the LpxH family. The cofactor is Mn(2+).

The protein localises to the cell inner membrane. It catalyses the reaction UDP-2-N,3-O-bis[(3R)-3-hydroxytetradecanoyl]-alpha-D-glucosamine + H2O = 2-N,3-O-bis[(3R)-3-hydroxytetradecanoyl]-alpha-D-glucosaminyl 1-phosphate + UMP + 2 H(+). It functions in the pathway glycolipid biosynthesis; lipid IV(A) biosynthesis; lipid IV(A) from (3R)-3-hydroxytetradecanoyl-[acyl-carrier-protein] and UDP-N-acetyl-alpha-D-glucosamine: step 4/6. Functionally, hydrolyzes the pyrophosphate bond of UDP-2,3-diacylglucosamine to yield 2,3-diacylglucosamine 1-phosphate (lipid X) and UMP by catalyzing the attack of water at the alpha-P atom. Involved in the biosynthesis of lipid A, a phosphorylated glycolipid that anchors the lipopolysaccharide to the outer membrane of the cell. The protein is UDP-2,3-diacylglucosamine hydrolase of Chromohalobacter salexigens (strain ATCC BAA-138 / DSM 3043 / CIP 106854 / NCIMB 13768 / 1H11).